A 363-amino-acid chain; its full sequence is NAD(P)H-quinone oxidoreductase subunit 1, chloroplastic (363 aa).

A run of 6 helical transmembrane segments spans residues 30-50 (LVPI…IVWL), 98-118 (FSIG…VIPF), 129-149 (IGIF…LMSG), 248-268 (YSGI…LLSS), 300-320 (IIGT…FLFI), and 343-363 (FLLP…LLSL).

It belongs to the complex I subunit 1 family. In terms of assembly, NDH is composed of at least 16 different subunits, 5 of which are encoded in the nucleus.

Its subcellular location is the plastid. The protein resides in the chloroplast thylakoid membrane. The enzyme catalyses a plastoquinone + NADH + (n+1) H(+)(in) = a plastoquinol + NAD(+) + n H(+)(out). It carries out the reaction a plastoquinone + NADPH + (n+1) H(+)(in) = a plastoquinol + NADP(+) + n H(+)(out). In terms of biological role, NDH shuttles electrons from NAD(P)H:plastoquinone, via FMN and iron-sulfur (Fe-S) centers, to quinones in the photosynthetic chain and possibly in a chloroplast respiratory chain. The immediate electron acceptor for the enzyme in this species is believed to be plastoquinone. Couples the redox reaction to proton translocation, and thus conserves the redox energy in a proton gradient. This is NAD(P)H-quinone oxidoreductase subunit 1, chloroplastic from Gossypium barbadense (Sea Island cotton).